The primary structure comprises 207 residues: MPTMNRSRRLALLCLGAPLLLAACASVAPSRGFDAGEGSASRHYTGRFSANYVRYGRDEGVQGSFRWEEQGRNVRLDLLSPLGQTLAVVTATPSGATLDLPNKPPRNAPEVDSLLEEALGFALPVAGMRDWLHGRPAPGRPAKSTRDTEGRLATLAQDGWSVRYVAWQEVPSASQAPAPRPRRIDLEREGGPTPLAVKLVIDPEEAP.

Positions methionine 1–alanine 23 are cleaved as a signal peptide. Cysteine 24 carries N-palmitoyl cysteine lipidation. Residue cysteine 24 is the site of S-diacylglycerol cysteine attachment. Positions proline 171–proline 207 are disordered.

The protein belongs to the LolB family. Monomer.

The protein resides in the cell outer membrane. Plays a critical role in the incorporation of lipoproteins in the outer membrane after they are released by the LolA protein. The protein is Outer-membrane lipoprotein LolB of Cupriavidus pinatubonensis (strain JMP 134 / LMG 1197) (Cupriavidus necator (strain JMP 134)).